A 68-amino-acid polypeptide reads, in one-letter code: Large ribosomal subunit protein eL24 (68 aa).

Residues cysteine 7, cysteine 10, cysteine 33, and cysteine 37 each coordinate Zn(2+). The C4-type zinc-finger motif lies at 7–37; it reads CDFCGRIIEPGTGKMFVKNDGTILWFCSSKC.

It belongs to the eukaryotic ribosomal protein eL24 family. Part of the 50S ribosomal subunit. Forms a cluster with proteins L3 and L14. It depends on Zn(2+) as a cofactor.

In terms of biological role, binds to the 23S rRNA. This chain is Large ribosomal subunit protein eL24, found in Methanopyrus kandleri (strain AV19 / DSM 6324 / JCM 9639 / NBRC 100938).